A 245-amino-acid chain; its full sequence is Geranylgeranylglyceryl phosphate synthase (245 aa).

Residues D22 and S51 each coordinate Mg(2+). Residues Y169–G175, G200–G201, and G222–T223 contribute to the sn-glycerol 1-phosphate site.

It belongs to the GGGP/HepGP synthase family. Group II subfamily. As to quaternary structure, homotetramer. Homohexamer. Mg(2+) serves as cofactor.

It is found in the cytoplasm. The catalysed reaction is sn-glycerol 1-phosphate + (2E,6E,10E)-geranylgeranyl diphosphate = sn-3-O-(geranylgeranyl)glycerol 1-phosphate + diphosphate. Its pathway is membrane lipid metabolism; glycerophospholipid metabolism. In terms of biological role, prenyltransferase that catalyzes the transfer of the geranylgeranyl moiety of geranylgeranyl diphosphate (GGPP) to the C3 hydroxyl of sn-glycerol-1-phosphate (G1P). This reaction is the first ether-bond-formation step in the biosynthesis of archaeal membrane lipids. The polypeptide is Geranylgeranylglyceryl phosphate synthase (Methanothermobacter thermautotrophicus (strain ATCC 29096 / DSM 1053 / JCM 10044 / NBRC 100330 / Delta H) (Methanobacterium thermoautotrophicum)).